The chain runs to 89 residues: UPF0250 protein Bphyt_0500 (89 aa).

It belongs to the UPF0250 family.

The sequence is that of UPF0250 protein Bphyt_0500 from Paraburkholderia phytofirmans (strain DSM 17436 / LMG 22146 / PsJN) (Burkholderia phytofirmans).